A 260-amino-acid chain; its full sequence is NifU-like protein C1709.19c (260 aa).

The segment at 161–231 (IKELIETSIR…IPEVENVVQV (71 aa)) is nifU.

The protein belongs to the NifU family.

This Schizosaccharomyces pombe (strain 972 / ATCC 24843) (Fission yeast) protein is NifU-like protein C1709.19c.